The following is a 94-amino-acid chain: Neutrophil defensin 1 (94 aa).

An N-terminal signal peptide occupies residues 1 to 19 (MRTLAILAAILLVALQAQA). Residues 20-38 (EPLQARADEVAAAPEQIAA) constitute a propeptide that is removed on maturation. Cystine bridges form between cysteine 66/cysteine 94, cysteine 68/cysteine 83, and cysteine 73/cysteine 93. Arginine 78 is subject to ADP-ribosylarginine; by ART1. Residue tyrosine 85 is modified to Phosphotyrosine. Position 88 is an ADP-ribosylarginine; by ART1 (arginine 88).

It belongs to the alpha-defensin family. In terms of assembly, tetramer. Dimer. Interacts with RETN. As to quaternary structure, (Microbial infection) Interacts with HIV-1 surface protein gp120. (Microbial infection) Interacts with herpes virus 1 (HHV1) envelope glycoprotein B; this interaction inhibits viral infection. ADP-ribosylation drastically reduces cytotoxic and antibacterial activities, and enhances IL8 production. In terms of processing, phosphorylation at Tyr-85 has been found in some cancer cell lines, and interferes with ADP-ribosylation.

The protein localises to the secreted. In terms of biological role, effector molecule of the innate immune system that acts via antibiotic-like properties against a broad array of infectious agents including bacteria, fungi, and viruses or by promoting the activation and maturation of some APCs. Interacts with the essential precursor of cell wall synthesis lipid II to inhibit bacterial cell wall synthesis. Inhibits adenovirus infection via inhibition of viral disassembly at the vertex region, thereby restricting the release of internal capsid protein pVI, which is required for endosomal membrane penetration during cell entry. In addition, interaction with adenovirus capsid leads to the redirection of viral particles to TLR4 thereby promoting a NLRP3-mediated inflammasome response and interleukin 1-beta (IL-1beta) release. Induces the production of proinflammatory cytokines including type I interferon (IFN) in plasmacytoid dendritic cells (pDCs) by triggering the degradation of NFKBIA and nuclear translocation of IRF1, both of which are required for activation of pDCs. In Homo sapiens (Human), this protein is Neutrophil defensin 1 (DEFA1).